Consider the following 120-residue polypeptide: Large ribosomal subunit protein bL12 (120 aa).

The protein belongs to the bacterial ribosomal protein bL12 family. As to quaternary structure, homodimer. Part of the ribosomal stalk of the 50S ribosomal subunit. Forms a multimeric L10(L12)X complex, where L10 forms an elongated spine to which 2 to 4 L12 dimers bind in a sequential fashion. Binds GTP-bound translation factors.

Functionally, forms part of the ribosomal stalk which helps the ribosome interact with GTP-bound translation factors. Is thus essential for accurate translation. The sequence is that of Large ribosomal subunit protein bL12 from Clostridium botulinum (strain Alaska E43 / Type E3).